A 482-amino-acid chain; its full sequence is MKQLEKITPLEKDFAQWYTDVVTNGNLMNYGPAKGTIIYKPNSYGIWENIQKTLNEVFKKHGVENIYAPLFIPESLFKIEKEHVQGFNPELATVTQVGNKKLSEKLIVRPTSEVIFANLFKEDINSYNDLPKIYNQWANVVRWEKVTKPFLRTREFLWQEGHTSHSSAEEARSFTVKMIKEYEKFLKNYLAIPVVSGKKTCNEKFAGAVSTYTVEAMMKDGKALQTGTSHYLGQKFSRPYGISFKNKNNEEDFVYQTSWGVSTRLLGAIIMVHGDNRGVIIPPKIAPIKVDILEILADKNPEVSKVANKIYKELSKKLSVRLDASNKSPGFKASQSEIEGVPLRIEVGPRDLENNCVTFVRRDTLEKTKVDLENVKKEVNNYLKLIQNNLYQAAKQRLEENTVYAYNYEDFKKHIVDNKFVVVPFCCVTKKEIEIKEETGATPRCILKKVKPRGVKLECVCKSDGCCDDDKAIKYVVFARAY.

It belongs to the class-II aminoacyl-tRNA synthetase family. ProS type 3 subfamily. Homodimer.

It localises to the cytoplasm. It carries out the reaction tRNA(Pro) + L-proline + ATP = L-prolyl-tRNA(Pro) + AMP + diphosphate. In terms of biological role, catalyzes the attachment of proline to tRNA(Pro) in a two-step reaction: proline is first activated by ATP to form Pro-AMP and then transferred to the acceptor end of tRNA(Pro). The polypeptide is Proline--tRNA ligase (Mycoplasmopsis synoviae (strain 53) (Mycoplasma synoviae)).